Here is a 172-residue protein sequence, read N- to C-terminus: Peptide deformylase (172 aa).

Fe cation contacts are provided by Cys-92 and His-134. Glu-135 is an active-site residue. His-138 serves as a coordination point for Fe cation.

It belongs to the polypeptide deformylase family. It depends on Fe(2+) as a cofactor.

It catalyses the reaction N-terminal N-formyl-L-methionyl-[peptide] + H2O = N-terminal L-methionyl-[peptide] + formate. Functionally, removes the formyl group from the N-terminal Met of newly synthesized proteins. Requires at least a dipeptide for an efficient rate of reaction. N-terminal L-methionine is a prerequisite for activity but the enzyme has broad specificity at other positions. This is Peptide deformylase from Saccharophagus degradans (strain 2-40 / ATCC 43961 / DSM 17024).